A 77-amino-acid chain; its full sequence is uncharacterized protein (77 aa).

2 consecutive 4Fe-4S ferredoxin-type domains span residues 3-32 (VEII…WTKD) and 36-65 (KYYA…IKVV). The [4Fe-4S] cluster site is built by cysteine 12, cysteine 15, cysteine 18, cysteine 22, cysteine 45, cysteine 48, cysteine 51, and cysteine 55.

[4Fe-4S] cluster serves as cofactor.

In terms of biological role, ferredoxins are iron-sulfur proteins that transfer electrons probably in the CO-dehydrogenase complex. This is an uncharacterized protein from Methanocaldococcus jannaschii (strain ATCC 43067 / DSM 2661 / JAL-1 / JCM 10045 / NBRC 100440) (Methanococcus jannaschii).